The following is a 165-amino-acid chain: Protein-export protein SecB (165 aa).

It belongs to the SecB family. As to quaternary structure, homotetramer, a dimer of dimers. One homotetramer interacts with 1 SecA dimer.

Its subcellular location is the cytoplasm. Functionally, one of the proteins required for the normal export of preproteins out of the cell cytoplasm. It is a molecular chaperone that binds to a subset of precursor proteins, maintaining them in a translocation-competent state. It also specifically binds to its receptor SecA. The sequence is that of Protein-export protein SecB from Colwellia psychrerythraea (strain 34H / ATCC BAA-681) (Vibrio psychroerythus).